A 313-amino-acid chain; its full sequence is D-alanine--D-alanine ligase (313 aa).

Positions 107–303 (KQAFAAAGLT…FEALVEQIAC (197 aa)) constitute an ATP-grasp domain. 135-188 (PFGLPVVVKPVQEGSSVGVTIVKKPEDLQAALDEAFRYDTLVLVEKYIKGQEVQ) is a binding site for ATP. Residues D256, E269, and N271 each contribute to the Mg(2+) site.

It belongs to the D-alanine--D-alanine ligase family. It depends on Mg(2+) as a cofactor. Requires Mn(2+) as cofactor.

The protein localises to the cytoplasm. It catalyses the reaction 2 D-alanine + ATP = D-alanyl-D-alanine + ADP + phosphate + H(+). It participates in cell wall biogenesis; peptidoglycan biosynthesis. Functionally, cell wall formation. In Trichlorobacter lovleyi (strain ATCC BAA-1151 / DSM 17278 / SZ) (Geobacter lovleyi), this protein is D-alanine--D-alanine ligase.